Reading from the N-terminus, the 333-residue chain is 4-hydroxy-2-oxovalerate aldolase (333 aa).

Residues 4-254 form the Pyruvate carboxyltransferase domain; that stretch reads VKIFDLTLRD…DCGIDLYKTM (251 aa). Residue 12-13 coordinates substrate; sequence RD. D13 lines the Mn(2+) pocket. H16 acts as the Proton acceptor in catalysis. H193 contributes to the substrate binding site. H193 and H195 together coordinate Mn(2+). A substrate-binding site is contributed by Y284.

It belongs to the 4-hydroxy-2-oxovalerate aldolase family.

It catalyses the reaction (S)-4-hydroxy-2-oxopentanoate = acetaldehyde + pyruvate. The polypeptide is 4-hydroxy-2-oxovalerate aldolase (Desulfitobacterium hafniense (strain DSM 10664 / DCB-2)).